Reading from the N-terminus, the 167-residue chain is Leukotoxin-activating lysine-acyltransferase LktC serotype A1 (167 aa).

Catalysis depends on residues His22 and Asp91.

This sequence belongs to the RTX toxin acyltransferase family.

Its subcellular location is the cytoplasm. It carries out the reaction a fatty acyl-[ACP] + L-lysyl-[protein] = N(6)-(fatty acyl)-L-lysyl-[protein] + holo-[ACP] + H(+). Functionally, involved in fatty acylation of the protoxin (LktA) at two internal lysine residues, thereby converting it to the active toxin. The chain is Leukotoxin-activating lysine-acyltransferase LktC serotype A1 (lktC) from Mannheimia haemolytica (Pasteurella haemolytica).